The following is an 861-amino-acid chain: Leucine--tRNA ligase (861 aa).

The short motif at 42–52 is the 'HIGH' region element; it reads PYPSGKLHMGH. The 'KMSKS' region signature appears at 618–622; the sequence is KMSKS. Residue Lys-621 participates in ATP binding.

This sequence belongs to the class-I aminoacyl-tRNA synthetase family.

It is found in the cytoplasm. The enzyme catalyses tRNA(Leu) + L-leucine + ATP = L-leucyl-tRNA(Leu) + AMP + diphosphate. The chain is Leucine--tRNA ligase from Buchnera aphidicola subsp. Baizongia pistaciae (strain Bp).